The sequence spans 149 residues: Cytochrome c oxidase subunit 5A, mitochondrial (149 aa).

The protein belongs to the cytochrome c oxidase subunit 5A family. In terms of assembly, component of the cytochrome c oxidase (complex IV, CIV), a multisubunit enzyme composed of a catalytic core of 3 subunits and several supernumerary subunits. The complex exists as a monomer or a dimer and forms supercomplexes (SCs) in the inner mitochondrial membrane with ubiquinol-cytochrome c oxidoreductase (cytochrome b-c1 complex, complex III, CIII).

Its subcellular location is the mitochondrion inner membrane. Its pathway is energy metabolism; oxidative phosphorylation. Its function is as follows. Component of the cytochrome c oxidase, the last enzyme in the mitochondrial electron transport chain which drives oxidative phosphorylation. The respiratory chain contains 3 multisubunit complexes succinate dehydrogenase (complex II, CII), ubiquinol-cytochrome c oxidoreductase (cytochrome b-c1 complex, complex III, CIII) and cytochrome c oxidase (complex IV, CIV), that cooperate to transfer electrons derived from NADH and succinate to molecular oxygen, creating an electrochemical gradient over the inner membrane that drives transmembrane transport and the ATP synthase. Cytochrome c oxidase is the component of the respiratory chain that catalyzes the reduction of oxygen to water. Electrons originating from reduced cytochrome c in the intermembrane space (IMS) are transferred via the dinuclear copper A center (CU(A)) of subunit 2 and heme A of subunit 1 to the active site in subunit 1, a binuclear center (BNC) formed by heme A3 and copper B (CU(B)). The BNC reduces molecular oxygen to 2 water molecules using 4 electrons from cytochrome c in the IMS and 4 protons from the mitochondrial matrix. This is Cytochrome c oxidase subunit 5A, mitochondrial from Drosophila melanogaster (Fruit fly).